A 425-amino-acid polypeptide reads, in one-letter code: Nucleoporin nup45 (425 aa).

A compositionally biased stretch (polar residues) spans 1–10 (MFGLNKTPSF). Residues 1–207 (MFGLNKTPSF…GFGLSNNTQT (207 aa)) are disordered. Low complexity predominate over residues 11-27 (GSTGTQNQNTGTSAGTG). The span at 28–45 (LFSSNTFGNNTQANTPAS) shows a compositional bias: polar residues. The segment covering 47–56 (GFGGVTGGAF) has biased composition (gly residues). Polar residues predominate over residues 72-89 (PNATSTTPGLNLFGQNPQ). Low complexity-rich tracts occupy residues 112–126 (NQNQ…AAPT) and 135–150 (QNQT…ANTS). Residues 167 to 207 (NRPNTSTFGQFSTQPASAGLFGQSTQPSGSTGFGLSNNTQT) are compositionally biased toward polar residues. A phosphoserine mark is found at S289 and S290.

Its subcellular location is the cytoplasm. It is found in the nucleus. The protein resides in the nuclear pore complex. Functionally, functions as a component of the nuclear pore complex (NPC). NPC components, collectively referred to as nucleoporins (NUPs), can play the role of both NPC structural components and of docking or interaction partners for transiently associated nuclear transport factors. Active directional transport is assured by both, a Phe-Gly (FG) repeat affinity gradient for these transport factors across the NPC and a transport cofactor concentration gradient across the nuclear envelope. The polypeptide is Nucleoporin nup45 (nup45) (Schizosaccharomyces pombe (strain 972 / ATCC 24843) (Fission yeast)).